We begin with the raw amino-acid sequence, 195 residues long: ATP-dependent Clp protease proteolytic subunit (195 aa).

The Nucleophile role is filled by S98. H123 is a catalytic residue.

This sequence belongs to the peptidase S14 family. As to quaternary structure, fourteen ClpP subunits assemble into 2 heptameric rings which stack back to back to give a disk-like structure with a central cavity, resembling the structure of eukaryotic proteasomes.

It is found in the cytoplasm. It catalyses the reaction Hydrolysis of proteins to small peptides in the presence of ATP and magnesium. alpha-casein is the usual test substrate. In the absence of ATP, only oligopeptides shorter than five residues are hydrolyzed (such as succinyl-Leu-Tyr-|-NHMec, and Leu-Tyr-Leu-|-Tyr-Trp, in which cleavage of the -Tyr-|-Leu- and -Tyr-|-Trp bonds also occurs).. Its function is as follows. Cleaves peptides in various proteins in a process that requires ATP hydrolysis. Has a chymotrypsin-like activity. Plays a major role in the degradation of misfolded proteins. The polypeptide is ATP-dependent Clp protease proteolytic subunit (Caldanaerobacter subterraneus subsp. tengcongensis (strain DSM 15242 / JCM 11007 / NBRC 100824 / MB4) (Thermoanaerobacter tengcongensis)).